The sequence spans 344 residues: uncharacterized protein (344 aa).

The stretch at 221–249 (IQAQSMDEQKQIQEIYQNVEKLKEDVTKN) forms a coiled coil.

It belongs to the IIV-6 287R family.

This is an uncharacterized protein from Aedes vexans (Inland floodwater mosquito).